A 293-amino-acid polypeptide reads, in one-letter code: Elongation factor Ts (293 aa).

Residues 80–83 (TDFV) are involved in Mg(2+) ion dislocation from EF-Tu.

It belongs to the EF-Ts family.

It localises to the cytoplasm. Associates with the EF-Tu.GDP complex and induces the exchange of GDP to GTP. It remains bound to the aminoacyl-tRNA.EF-Tu.GTP complex up to the GTP hydrolysis stage on the ribosome. This is Elongation factor Ts from Herminiimonas arsenicoxydans.